A 305-amino-acid chain; its full sequence is MNQENTQIVAAFYKFVSLPDFTEKQVPLLAYCLAQDIKGTILLAKEGINGTIAGSRLSIDNVLSYLRADLRLQDLEHKESTADTPPFERMKVRLKKEIVTLGLPEVDPNEQVGTYVTPEEWNELISDPEVIVIDTRNDYEVHIGTFQGAQNPQTNSFRDFPEYVRQNLDPNQHKKVAMFCTGGIRCEKASSFMLSQGFAEVYHLKGGILKYLEQIPPEESLWQGECFVFDERIAVVHGLEPGTHELCFCCGHPLAEEDKASPQYEEGISCSHCFDSLTEDKRTRQQEKWRQYQLKNSHSLGNSKL.

Residues S126–S220 form the Rhodanese domain. The Cysteine persulfide intermediate role is filled by C180.

Belongs to the TrhO family.

The catalysed reaction is uridine(34) in tRNA + AH2 + O2 = 5-hydroxyuridine(34) in tRNA + A + H2O. Functionally, catalyzes oxygen-dependent 5-hydroxyuridine (ho5U) modification at position 34 in tRNAs. The polypeptide is tRNA uridine(34) hydroxylase (Trichormus variabilis (strain ATCC 29413 / PCC 7937) (Anabaena variabilis)).